A 726-amino-acid polypeptide reads, in one-letter code: ATP-dependent permease MDL1, mitochondrial (726 aa).

A mitochondrion-targeting transit peptide spans 1–112 (MDPIRFGLSR…LAFLKLCVRH (112 aa)). N-linked (GlcNAc...) asparagine glycans are attached at residues Asn66, Asn113, and Asn132. Helical transmembrane passes span 158-178 (FFIA…IPYI), 196-216 (IMGI…FLGS), 306-326 (GYMS…GEYV), 386-406 (GIFF…ILAL), and 423-443 (SFLL…GCFT). The ABC transmembrane type-1 domain maps to 158–447 (FFIAGSLLLV…LSGCFTDIMK (290 aa)). The ABC transporter domain occupies 482–719 (LSFRNVGFAY…GTNFYKLMRW (238 aa)). An N-linked (GlcNAc...) asparagine glycan is attached at Asn502. Position 517–524 (517–524 (APSGGGKS)) interacts with ATP. Asn584, Asn598, and Asn668 each carry an N-linked (GlcNAc...) asparagine glycan.

This sequence belongs to the ABC transporter superfamily. ABCB family. Mitochondrial peptide exporter (TC 3.A.1.212) subfamily.

The protein resides in the mitochondrion inner membrane. Functionally, mediates export of peptides generated upon proteolysis of mitochondrial inner membrane proteins. This chain is ATP-dependent permease MDL1, mitochondrial (mdl1), found in Schizosaccharomyces pombe (strain 972 / ATCC 24843) (Fission yeast).